Consider the following 307-residue polypeptide: Aspartate carbamoyltransferase catalytic subunit (307 aa).

Residues Arg54 and Thr55 each contribute to the carbamoyl phosphate site. L-aspartate is bound at residue Lys83. Residues Arg104, His132, and Gln135 each contribute to the carbamoyl phosphate site. 2 residues coordinate L-aspartate: Arg165 and Arg228. Positions 267 and 268 each coordinate carbamoyl phosphate.

The protein belongs to the aspartate/ornithine carbamoyltransferase superfamily. ATCase family. Heterododecamer (2C3:3R2) of six catalytic PyrB chains organized as two trimers (C3), and six regulatory PyrI chains organized as three dimers (R2).

The enzyme catalyses carbamoyl phosphate + L-aspartate = N-carbamoyl-L-aspartate + phosphate + H(+). It participates in pyrimidine metabolism; UMP biosynthesis via de novo pathway; (S)-dihydroorotate from bicarbonate: step 2/3. Its function is as follows. Catalyzes the condensation of carbamoyl phosphate and aspartate to form carbamoyl aspartate and inorganic phosphate, the committed step in the de novo pyrimidine nucleotide biosynthesis pathway. The chain is Aspartate carbamoyltransferase catalytic subunit from Clostridium botulinum (strain Eklund 17B / Type B).